We begin with the raw amino-acid sequence, 325 residues long: GMP reductase (325 aa).

Residue Cys173 is the Thioimidate intermediate of the active site. Residue 202–225 coordinates NADP(+); the sequence is IIADGGIHEHGDIAKSIRFGATMV.

It belongs to the IMPDH/GMPR family. GuaC type 2 subfamily.

It catalyses the reaction IMP + NH4(+) + NADP(+) = GMP + NADPH + 2 H(+). Its function is as follows. Catalyzes the irreversible NADPH-dependent deamination of GMP to IMP. It functions in the conversion of nucleobase, nucleoside and nucleotide derivatives of G to A nucleotides, and in maintaining the intracellular balance of A and G nucleotides. The protein is GMP reductase of Albidiferax ferrireducens (strain ATCC BAA-621 / DSM 15236 / T118) (Rhodoferax ferrireducens).